Here is a 314-residue protein sequence, read N- to C-terminus: Methionyl-tRNA formyltransferase (314 aa).

110–113 (SLLP) contacts (6S)-5,6,7,8-tetrahydrofolate.

Belongs to the Fmt family.

The enzyme catalyses L-methionyl-tRNA(fMet) + (6R)-10-formyltetrahydrofolate = N-formyl-L-methionyl-tRNA(fMet) + (6S)-5,6,7,8-tetrahydrofolate + H(+). In terms of biological role, attaches a formyl group to the free amino group of methionyl-tRNA(fMet). The formyl group appears to play a dual role in the initiator identity of N-formylmethionyl-tRNA by promoting its recognition by IF2 and preventing the misappropriation of this tRNA by the elongation apparatus. The chain is Methionyl-tRNA formyltransferase from Bacillus cereus (strain B4264).